Here is a 96-residue protein sequence, read N- to C-terminus: Co-chaperonin GroES (96 aa).

The protein belongs to the GroES chaperonin family. In terms of assembly, heptamer of 7 subunits arranged in a ring. Interacts with the chaperonin GroEL.

It localises to the cytoplasm. In terms of biological role, together with the chaperonin GroEL, plays an essential role in assisting protein folding. The GroEL-GroES system forms a nano-cage that allows encapsulation of the non-native substrate proteins and provides a physical environment optimized to promote and accelerate protein folding. GroES binds to the apical surface of the GroEL ring, thereby capping the opening of the GroEL channel. This Actinobacillus pleuropneumoniae serotype 7 (strain AP76) protein is Co-chaperonin GroES.